Here is a 698-residue protein sequence, read N- to C-terminus: Elongation factor G 1 (698 aa).

The 283-residue stretch at 8–290 (ERYRNIGICA…AVVEFLPAPV (283 aa)) folds into the tr-type G domain. GTP-binding positions include 17–24 (AHVDAGKT), 88–92 (DTPGH), and 142–145 (NKMD).

The protein belongs to the TRAFAC class translation factor GTPase superfamily. Classic translation factor GTPase family. EF-G/EF-2 subfamily.

The protein localises to the cytoplasm. Catalyzes the GTP-dependent ribosomal translocation step during translation elongation. During this step, the ribosome changes from the pre-translocational (PRE) to the post-translocational (POST) state as the newly formed A-site-bound peptidyl-tRNA and P-site-bound deacylated tRNA move to the P and E sites, respectively. Catalyzes the coordinated movement of the two tRNA molecules, the mRNA and conformational changes in the ribosome. This Shewanella sp. (strain MR-4) protein is Elongation factor G 1.